Reading from the N-terminus, the 384-residue chain is Intraflagellar transport protein 46 homolog (384 aa).

Disordered stretches follow at residues 52–151 and 358–384; these read VNAE…PADY and SATDGQKSDTPPASRSATAEIERLTLD. Basic and acidic residues predominate over residues 87-99; sequence EKLEEDTKRKKEP. The span at 110 to 138 shows a compositional bias: acidic residues; that stretch reads DEEEDEDDDDDDDDDDSDDTESDEEEEEP. A compositionally biased stretch (polar residues) spans 358–374; that stretch reads SATDGQKSDTPPASRSA.

This sequence belongs to the IFT46 family.

The protein resides in the cytoplasm. It is found in the cytoskeleton. Its subcellular location is the cilium basal body. It localises to the cell projection. The protein localises to the cilium. Its function is as follows. Forms part of a complex involved in intraflagellar transport (IFT), the bi-directional movement of particles required for the assembly, maintenance and functioning of primary cilia. Plays a role in early embryonic development. The protein is Intraflagellar transport protein 46 homolog of Danio rerio (Zebrafish).